Here is a 397-residue protein sequence, read N- to C-terminus: Tryptophan synthase beta chain (397 aa).

Lys91 carries the post-translational modification N6-(pyridoxal phosphate)lysine.

Belongs to the TrpB family. Tetramer of two alpha and two beta chains. Pyridoxal 5'-phosphate is required as a cofactor.

The enzyme catalyses (1S,2R)-1-C-(indol-3-yl)glycerol 3-phosphate + L-serine = D-glyceraldehyde 3-phosphate + L-tryptophan + H2O. It functions in the pathway amino-acid biosynthesis; L-tryptophan biosynthesis; L-tryptophan from chorismate: step 5/5. The beta subunit is responsible for the synthesis of L-tryptophan from indole and L-serine. The chain is Tryptophan synthase beta chain from Bacillus thuringiensis (strain Al Hakam).